We begin with the raw amino-acid sequence, 226 residues long: Urease accessory protein UreF (226 aa).

It belongs to the UreF family. In terms of assembly, ureD, UreF and UreG form a complex that acts as a GTP-hydrolysis-dependent molecular chaperone, activating the urease apoprotein by helping to assemble the nickel containing metallocenter of UreC. The UreE protein probably delivers the nickel.

The protein localises to the cytoplasm. Functionally, required for maturation of urease via the functional incorporation of the urease nickel metallocenter. This Burkholderia cenocepacia (strain ATCC BAA-245 / DSM 16553 / LMG 16656 / NCTC 13227 / J2315 / CF5610) (Burkholderia cepacia (strain J2315)) protein is Urease accessory protein UreF.